A 64-amino-acid chain; its full sequence is MAQEQTKRGGGGGEDDDLTGSTAAGQERREKLTDETDDLLDEIDDVLEENAEDFVRAYVQKGGQ.

Positions 1–37 (MAQEQTKRGGGGGEDDDLTGSTAAGQERREKLTDETD) are disordered. The tract at residues 21 to 58 (STAAGQERREKLTDETDDLLDEIDDVLEENAEDFVRAY) is ARC ATPase binding. A coiled-coil region spans residues 23–52 (AAGQERREKLTDETDDLLDEIDDVLEENAE). At Gln64 the chain carries Deamidated glutamine. An Isoglutamyl lysine isopeptide (Gln-Lys) (interchain with K-? in acceptor proteins) cross-link involves residue Gln64.

The protein belongs to the prokaryotic ubiquitin-like protein family. As to quaternary structure, strongly interacts with the proteasome-associated ATPase ARC through a hydrophobic interface; the interacting region of Pup lies in its C-terminal half. There is one Pup binding site per ARC hexamer ring. Is modified by deamidation of its C-terminal glutamine to glutamate by the deamidase Dop, a prerequisite to the subsequent pupylation process.

It participates in protein degradation; proteasomal Pup-dependent pathway. Its function is as follows. Protein modifier that is covalently attached to lysine residues of substrate proteins, thereby targeting them for proteasomal degradation. The tagging system is termed pupylation. This Mycolicibacterium vanbaalenii (strain DSM 7251 / JCM 13017 / BCRC 16820 / KCTC 9966 / NRRL B-24157 / PYR-1) (Mycobacterium vanbaalenii) protein is Prokaryotic ubiquitin-like protein Pup.